We begin with the raw amino-acid sequence, 272 residues long: Phosphonates import ATP-binding protein PhnC (272 aa).

The 243-residue stretch at 2–244 (LVFDKVNRVY…IQKRLYEIEH (243 aa)) folds into the ABC transporter domain. ATP is bound at residue 35–42 (GPSGAGKS).

It belongs to the ABC transporter superfamily. Phosphonates importer (TC 3.A.1.9.1) family. In terms of assembly, the complex is composed of two ATP-binding proteins (PhnC), two transmembrane proteins (PhnE) and a solute-binding protein (PhnD).

Its subcellular location is the cell inner membrane. The catalysed reaction is phosphonate(out) + ATP + H2O = phosphonate(in) + ADP + phosphate + H(+). Its function is as follows. Part of the ABC transporter complex PhnCDE involved in phosphonates import. Responsible for energy coupling to the transport system. The polypeptide is Phosphonates import ATP-binding protein PhnC (Hydrogenovibrio crunogenus (strain DSM 25203 / XCL-2) (Thiomicrospira crunogena)).